Here is a 171-residue protein sequence, read N- to C-terminus: Tetratricopeptide repeat protein 9C (171 aa).

TPR repeat units lie at residues 8–41, 72–107, and 108–141; these read AQLY…LRGL, TDCY…QPEN, and AKAL…QPKD.

It belongs to the TTC9 family.

This is Tetratricopeptide repeat protein 9C (Ttc9c) from Rattus norvegicus (Rat).